The following is a 1306-amino-acid chain: MADTRGRWAWDVPGFEPPQPVVGAAAGMPLAPPTAMPRAPPTAMVARAAGADGAVVPVADRLDQLADSVQLAREDCLELRQEASDLLEYSNAKLGRVTRYLGFLADRTRKLDQAALETEARITPLIHEKKRLFNDLLTLKGNVKVFCRSRPLFEDEGSSVVEFPDDFTIRVNTGDESLTNPKKDYEFDRVYGPHIGQGELFHDVQPLVQSALDGYNVAIFAYGQSRSGKTHTLEGSSHDRGLYLRSFEELFDLSNSDTTSTSHFNFYITACELYNDQVRDLLSDSISPVPKVRMGVQESFVELVQEKVENPLEFSNSLKAALENRSANSLKVMVSHLIVTIHIHYRNYVTGEHLYSKLSLVDLPASECLLEEDANRDNVTDFLHVSKSLSALGDALASLSAKKEPVLSGNSRITQILADSLGSSSKTLLIVHVSPSASNLSRTLSTLSFSARAKNAELSLGNRDTIKKWKDVANDSRKELHDKEKEVLDLRQEVLGLKLSLKEANDQCTLLFNEVQKAWRVSSTLQADLKSENLMLAEKHRIEKEQNNQLRDQISRLLEVEQEQKIKMHERDLTIQSLQAKLKSIESQLNEALNSSDARSTIGSESASVISTPKMMESTADSSSVTKRLEEELAKRDALIEKLHEENEKLFDRLTEKSGLGSSPQAPSPSNKQTNAQGRDIGRSDSTKSQSSDVFPLPVSQDKAGNSGAIVKSSNELTKTTPAGEYLTSALMDFDPNQFEGVAAIADGANKLLMLPYFHCHRDYNETPPISDWCMVLAAVIKAGAAREHEILAEIRDAVFSFIRKMEPRKVMDTMLVSRVKILYIRSLLARSPELQSIKVSPVERFLEKSHTSRSRSSSRGSSPGRSPVHHHHDHGSRTSLIDEHVHGFKVNIKPERKSKFSSIVLKLRGIEEETWRQHVTGGKLREITEEAKAFAIGNKALAALFVHTPAGELQRQIRAWLAENFEFLSVTGGDVAGASGQLELLSTAIMDGWMAGLGTARPPSTDALGQLLSEYTKRVYTSQLHHLKDIAGTLATEVADDPAHVSKLRSALESVDHKRRKIMQQMRTDTVLLTKEEGGSPIRNPPTAAEDARLASLISLDNIIKQVKEVMRQSSARPLRKSKKKALLESLDDLLAQMPSLLDVDHPCAQKQIMEARKVVESLQEDPDEPATDLNSNTLGESEVSQWNVLQFNTGTSAPFIIKCGANSSCELVIKADQKIQEPKGDEIIRVVPKPSVLAEMSFEEIKGVFEELPEAISLLALARTADGTRARYSRLYRTLANKVPALKDIVAEMEKGGVFKDVRS.

A Kinesin motor domain is found at 142–456 (NVKVFCRSRP…LSFSARAKNA (315 aa)). ATP is bound at residue 223–230 (GQSRSGKT). Coiled coils occupy residues 466–507 (IKKW…ANDQ) and 540–595 (HRIE…ALNS). Composition is skewed to polar residues over residues 592–611 (ALNSSDARSTIGSESASVIS) and 660–677 (LGSSPQAPSPSNKQTNAQ). 3 disordered regions span residues 592–627 (ALNSSDARSTIGSESASVISTPKMMESTADSSSVTK), 657–710 (KSGL…SGAI), and 849–881 (KSHTSRSRSSSRGSSPGRSPVHHHHDHGSRTSL). The span at 855–867 (SRSSSRGSSPGRS) shows a compositional bias: low complexity.

Belongs to the TRAFAC class myosin-kinesin ATPase superfamily. Kinesin family. KIN-14 subfamily.

The chain is Kinesin-like protein KIN-14L from Oryza sativa subsp. japonica (Rice).